A 234-amino-acid chain; its full sequence is MTQQLTAVVPAAGIGSRMAADRPKQYLHIAGKTILEHTIDRLFSHPAITRVIIAISQTDPYFASLPLANDPRITVVDGGAERADSVFAGLAAIDDENTWVLVHDAARPCVRLNDLERLVEAAIRSDSGAILAAPVRDTMKRGCQQINGLQGIVSTVDRNNLWHALTPQMFKVKQLKDSLQHALKEGAVITDEASALEYCGYIPQLVKGRSDNLKVTQPEDLALAGFYLEQLMKE.

It belongs to the IspD/TarI cytidylyltransferase family. IspD subfamily.

The catalysed reaction is 2-C-methyl-D-erythritol 4-phosphate + CTP + H(+) = 4-CDP-2-C-methyl-D-erythritol + diphosphate. It functions in the pathway isoprenoid biosynthesis; isopentenyl diphosphate biosynthesis via DXP pathway; isopentenyl diphosphate from 1-deoxy-D-xylulose 5-phosphate: step 2/6. Functionally, catalyzes the formation of 4-diphosphocytidyl-2-C-methyl-D-erythritol from CTP and 2-C-methyl-D-erythritol 4-phosphate (MEP). The polypeptide is 2-C-methyl-D-erythritol 4-phosphate cytidylyltransferase (Photobacterium profundum (strain SS9)).